A 264-amino-acid polypeptide reads, in one-letter code: Ribosomal RNA small subunit methyltransferase A (264 aa).

S-adenosyl-L-methionine is bound by residues N12, L14, G39, E60, D83, and N103.

Belongs to the class I-like SAM-binding methyltransferase superfamily. rRNA adenine N(6)-methyltransferase family. RsmA subfamily.

Its subcellular location is the cytoplasm. The enzyme catalyses adenosine(1518)/adenosine(1519) in 16S rRNA + 4 S-adenosyl-L-methionine = N(6)-dimethyladenosine(1518)/N(6)-dimethyladenosine(1519) in 16S rRNA + 4 S-adenosyl-L-homocysteine + 4 H(+). Functionally, specifically dimethylates two adjacent adenosines (A1518 and A1519) in the loop of a conserved hairpin near the 3'-end of 16S rRNA in the 30S particle. May play a critical role in biogenesis of 30S subunits. This chain is Ribosomal RNA small subunit methyltransferase A, found in Syntrophotalea carbinolica (strain DSM 2380 / NBRC 103641 / GraBd1) (Pelobacter carbinolicus).